The sequence spans 304 residues: tRNA pseudouridine synthase B (304 aa).

Aspartate 38 acts as the Nucleophile in catalysis.

It belongs to the pseudouridine synthase TruB family. Type 1 subfamily.

It carries out the reaction uridine(55) in tRNA = pseudouridine(55) in tRNA. Its function is as follows. Responsible for synthesis of pseudouridine from uracil-55 in the psi GC loop of transfer RNAs. The chain is tRNA pseudouridine synthase B from Listeria welshimeri serovar 6b (strain ATCC 35897 / DSM 20650 / CCUG 15529 / CIP 8149 / NCTC 11857 / SLCC 5334 / V8).